The following is a 226-amino-acid chain: 7-cyano-7-deazaguanine synthase (226 aa).

ATP is bound at residue 8 to 18 (ISGGLDSTTCL). Cysteine 188, cysteine 198, cysteine 201, and cysteine 204 together coordinate Zn(2+).

It belongs to the QueC family. Zn(2+) is required as a cofactor.

The enzyme catalyses 7-carboxy-7-deazaguanine + NH4(+) + ATP = 7-cyano-7-deazaguanine + ADP + phosphate + H2O + H(+). Its pathway is purine metabolism; 7-cyano-7-deazaguanine biosynthesis. Its function is as follows. Catalyzes the ATP-dependent conversion of 7-carboxy-7-deazaguanine (CDG) to 7-cyano-7-deazaguanine (preQ(0)). The sequence is that of 7-cyano-7-deazaguanine synthase from Coxiella burnetii (strain RSA 493 / Nine Mile phase I).